The chain runs to 3410 residues: Genome polyprotein (3410 aa).

Residues 1–103 are Cytoplasmic-facing; sequence MTKKPGRPGR…DFVHLPKKKS (103 aa). An interaction with host EXOC1 region spans residues 2 to 15; it reads TKKPGRPGRNRAVN. The hydrophobic; homodimerization of capsid protein C stretch occupies residues 38–73; it reads LLDGRGPLRMVLAILAFFRFTALKPTAGLLKRWGMM. A propeptide spans 103–119 (ER anchor for the capsid protein C, removed in mature form by serine protease NS3); sequence SGVSIIGRMLVFSFTAA. The helical transmembrane segment at 104 to 124 threads the bilayer; sequence GVSIIGRMLVFSFTAAVRVTL. The Extracellular segment spans residues 125–245; sequence ENGMSLMKIQ…ATSYLTKAES (121 aa). The helical transmembrane segment at 246–266 threads the bilayer; the sequence is WALRNPGYALVAAVLGWSLGT. Residues 267 to 271 are Cytoplasmic-facing; sequence SNAQK. A helical transmembrane segment spans residues 272–286; the sequence is VIFTVMILLIAPAYS. Residues 287 to 739 lie on the Extracellular side of the membrane; sequence IRCVGVENRD…QIFGGMFRTL (453 aa). 6 cysteine pairs are disulfide-bonded: Cys-289–Cys-316, Cys-346–Cys-402, Cys-346–Cys-407, Cys-360–Cys-391, Cys-378–Cys-402, and Cys-378–Cys-407. Residues 384 to 397 form a fusion peptide region; that stretch reads DRGWGNGCGLFGKG. Asn-440 carries N-linked (GlcNAc...) asparagine; by host glycosylation. Intrachain disulfides connect Cys-476–Cys-574 and Cys-591–Cys-622. A helical transmembrane segment spans residues 740–760; that stretch reads FGGMSWFTQIMIGALCCWLGI. The Cytoplasmic portion of the chain corresponds to 761-766; sequence NARDRT. The helical transmembrane segment at 767–787 threads the bilayer; that stretch reads IAVTFLAVGGVLVFLATSVNA. The Extracellular segment spans residues 788–1165; it reads DSGCALDLKR…IALQEVMRKR (378 aa). 8 disulfides stabilise this stretch: Cys-791/Cys-802, Cys-842/Cys-928, Cys-964/Cys-1009, Cys-1066/Cys-1115, Cys-1077/Cys-1098, Cys-1077/Cys-1099, Cys-1098/Cys-1102, and Cys-1099/Cys-1102. Asn-915 is a glycosylation site (N-linked (GlcNAc...) asparagine; by host). The chain crosses the membrane as a helical span at residues 1166–1186; the sequence is ILGRHITWMVIAVFMAMILGG. The Cytoplasmic segment spans residues 1187 to 1214; it reads LSYRDLGRYLVLVGAAFAERNSGGDLLH. A helical membrane pass occupies residues 1215 to 1235; that stretch reads LVLVATFKVKPMALLGFVLGG. Residues 1236 to 1242 are Lumenal-facing; it reads RWCRRQS. The chain crosses the membrane as a helical span at residues 1243–1263; it reads LLLSIGAVLVNFALEFQGGYF. Residues 1264-1284 lie on the Cytoplasmic side of the membrane; sequence ELVDSLALALLFVKAVVQTDT. Residues 1285–1305 form a helical membrane-spanning segment; that stretch reads TSVSLPLLAALAPAGCYTVLG. At 1306–1335 the chain is on the lumenal side; it reads THRFIMLTLVLVTFLGCKKTASVKKAGTAA. A helical transmembrane segment spans residues 1336 to 1356; that stretch reads VGVVLGMVGMKTIPMLGMLMV. The Cytoplasmic portion of the chain corresponds to 1357-1363; it reads TSRARRS. The helical transmembrane segment at 1364–1384 threads the bilayer; it reads WPLHEAMAAVGILCALFGALA. Over 1385–1387 the chain is Lumenal; that stretch reads ETE. The helical transmembrane segment at 1388–1408 threads the bilayer; that stretch reads VDLAGPLAAAGLIVMAYVISG. The Cytoplasmic segment spans residues 1409–1464; sequence RSNDLSIKKVEDVKWSDEAEVTGESVSYHVSLDVRGDPTLTEDSGPGLEKVLLKVG. The tract at residues 1415–1454 is interacts with and activates NS3 protease; it reads IKKVEDVKWSDEAEVTGESVSYHVSLDVRGDPTLTEDSGP. The helical intramembrane region spans 1465–1485; the sequence is LMAISGIYPVAIPFALGAWFF. Residues 1486-2158 are Cytoplasmic-facing; it reads LEKRCKRAGA…KAALENSPEM (673 aa). The Peptidase S7 domain maps to 1493-1670; that stretch reads AGALWDIPSP…ENVGQEDGAE (178 aa). Residues His-1543, Asp-1567, and Ser-1627 each act as charge relay system; for serine protease NS3 activity in the active site. The Helicase ATP-binding domain occupies 1673–1829; it reads DNWFRKRELT…PSNSPIIDEE (157 aa). Residues 1677–1680 are important for RNA-binding; sequence RKRE. 1686 to 1693 provides a ligand contact to ATP; that stretch reads LHPGAGKT. Residues 1777-1780 carry the DEAH box motif; sequence DEAH. Residues 1839–2006 form the Helicase C-terminal domain; the sequence is SGYEWIIEFD…QLYTPEREKT (168 aa). Lys-1881 is modified (N6-acetyllysine; by host). Residues 2153-2157 form a regulates the ATPase activity of NS3 helicase region; that stretch reads ENSPE. A helical transmembrane segment spans residues 2159-2179; it reads IETFLLCALVCLMTIGLVVVL. Topologically, residues 2180-2185 are lumenal; it reads VRGKGP. The segment at residues 2186-2205 is an intramembrane region (helical); the sequence is GKLAFGMVSIGVMTWLLWSA. Gly-2206 is a topological domain (lumenal). The chain crosses the membrane as a helical span at residues 2207-2227; the sequence is VDPGKIAAAVILVFLLLVVLI. The Cytoplasmic portion of the chain corresponds to 2228–2242; the sequence is PEPEKQRSVQDNQLA. Residues 2243–2257 traverse the membrane as a helical segment; sequence MLMLLIATILGGVAA. Over 2258–2293 the chain is Lumenal; the sequence is NEMGWLEKTKADLSWVVRGRSSTTTPVVELDMKPAT. The helical intramembrane region spans 2294–2314; that stretch reads AWTLYALATTLLTPLFQHLIV. Over 2315–2336 the chain is Lumenal; sequence TKYANISLMAIASQAGTLFSMD. A helical transmembrane segment spans residues 2337–2357; it reads SGIPFSSIELSVPLLALGCWT. Gln-2358 is a topological domain (cytoplasmic). Residues 2359-2379 traverse the membrane as a helical segment; it reads ITPCSLILACVLLSTHYAILL. The Lumenal segment spans residues 2380 to 2420; it reads PGMQAQAARDAQRRTAAGIMKNAVVDGIVATDIPPLDGAGP. Residues 2421-2441 form a helical membrane-spanning segment; it reads LTEKKLGQLLLFAAAVTGVVI. Residues 2442 to 3410 lie on the Cytoplasmic side of the membrane; that stretch reads TRSPRSWSEL…EKRVEFRGVL (969 aa). One can recognise an mRNA cap 0-1 NS5-type MT domain in the interval 2508–2773; it reads GGGIGETLGE…DVNLSCGTRA (266 aa). Ser-2563 serves as a coordination point for S-adenosyl-L-methionine. Ser-2563 bears the Phosphoserine mark. Lys-2568 functions as the For 2'-O-MTase activity in the catalytic mechanism. S-adenosyl-L-methionine is bound by residues Gly-2593, Trp-2594, Thr-2611, Lys-2612, Asp-2638, and Val-2639. Residue Asp-2653 is the For 2'-O-MTase activity of the active site. Ile-2654 provides a ligand contact to S-adenosyl-L-methionine. Active-site for 2'-O-MTase activity residues include Lys-2690 and Glu-2726. Position 2728 (Tyr-2728) interacts with S-adenosyl-L-methionine. Positions 2947, 2951, 2956, and 2959 each coordinate Zn(2+). The region spanning 3036–3187 is the RdRp catalytic domain; sequence GILYADDTAG…AAPDARFGAA (152 aa). Zn(2+) is bound by residues His-3222, Cys-3238, and Cys-3356.

In the N-terminal section; belongs to the class I-like SAM-binding methyltransferase superfamily. mRNA cap 0-1 NS5-type methyltransferase family. As to quaternary structure, homodimer. Interacts (via N-terminus) with host EXOC1 (via C-terminus); this interaction results in EXOC1 degradation through the proteasome degradation pathway. Forms heterodimers with envelope protein E in the endoplasmic reticulum and Golgi. In terms of assembly, homodimer; in the endoplasmic reticulum and Golgi. Interacts with protein prM. Interacts with non-structural protein 1. As to quaternary structure, homodimer; Homohexamer when secreted. Interacts with envelope protein E. NS1 interacts with NS4B. Interacts with host complement protein CFH; this interaction leads to the degradation of C3. Interacts (via N-terminus) with serine protease NS3. In terms of assembly, forms a heterodimer with serine protease NS3. May form homooligomers. As to quaternary structure, forms a heterodimer with NS2B. Interacts with non-structural protein 2A (via N-terminus). Interacts with NS4B. Interacts with unphosphorylated RNA-directed RNA polymerase NS5; this interaction stimulates RNA-directed RNA polymerase NS5 guanylyltransferase activity. Interacts with serine protease NS3. In terms of assembly, homodimer. Interacts with host STAT2; this interaction inhibits the phosphorylation of the latter, and, when all viral proteins are present (polyprotein), targets STAT2 for degradation. Specific enzymatic cleavages in vivo yield mature proteins. Cleavages in the lumen of endoplasmic reticulum are performed by host signal peptidase, whereas cleavages in the cytoplasmic side are performed by serine protease NS3. Signal cleavage at the 2K-4B site requires a prior NS3 protease-mediated cleavage at the 4A-2K site. In terms of processing, cleaved in post-Golgi vesicles by a host furin, releasing the mature small envelope protein M, and peptide pr. This cleavage is incomplete as up to 30% of viral particles still carry uncleaved prM. Post-translationally, N-glycosylated. N-glycosylated. The excreted form is glycosylated and this is required for efficient secretion of the protein from infected cells. In terms of processing, acetylated by host KAT5. Acetylation modulates NS3 RNA-binding and unwinding activities and plays an important positive role for viral replication. Post-translationally, phosphorylated on serines residues. This phosphorylation may trigger NS5 nuclear localization.

Its subcellular location is the virion. The protein resides in the host nucleus. The protein localises to the host cytoplasm. It localises to the host perinuclear region. It is found in the secreted. Its subcellular location is the virion membrane. The protein resides in the host endoplasmic reticulum membrane. It catalyses the reaction Selective hydrolysis of -Xaa-Xaa-|-Yaa- bonds in which each of the Xaa can be either Arg or Lys and Yaa can be either Ser or Ala.. The enzyme catalyses RNA(n) + a ribonucleoside 5'-triphosphate = RNA(n+1) + diphosphate. It carries out the reaction a ribonucleoside 5'-triphosphate + H2O = a ribonucleoside 5'-diphosphate + phosphate + H(+). The catalysed reaction is ATP + H2O = ADP + phosphate + H(+). It catalyses the reaction a 5'-end (5'-triphosphoguanosine)-ribonucleoside in mRNA + S-adenosyl-L-methionine = a 5'-end (N(7)-methyl 5'-triphosphoguanosine)-ribonucleoside in mRNA + S-adenosyl-L-homocysteine. The enzyme catalyses a 5'-end (N(7)-methyl 5'-triphosphoguanosine)-ribonucleoside in mRNA + S-adenosyl-L-methionine = a 5'-end (N(7)-methyl 5'-triphosphoguanosine)-(2'-O-methyl-ribonucleoside) in mRNA + S-adenosyl-L-homocysteine + H(+). Plays a role in virus budding by binding to the cell membrane and gathering the viral RNA into a nucleocapsid that forms the core of a mature virus particle. During virus entry, may induce genome penetration into the host cytoplasm after hemifusion induced by the surface proteins. Can migrate to the cell nucleus where it modulates host functions. Overcomes the anti-viral effects of host EXOC1 by sequestering and degrading the latter through the proteasome degradation pathway. Its function is as follows. Inhibits RNA silencing by interfering with host Dicer. In terms of biological role, prevents premature fusion activity of envelope proteins in trans-Golgi by binding to envelope protein E at pH6.0. After virion release in extracellular space, gets dissociated from E dimers. Functionally, acts as a chaperone for envelope protein E during intracellular virion assembly by masking and inactivating envelope protein E fusion peptide. prM is the only viral peptide matured by host furin in the trans-Golgi network probably to avoid catastrophic activation of the viral fusion activity in acidic Golgi compartment prior to virion release. prM-E cleavage is inefficient, and many virions are only partially matured. These uncleaved prM would play a role in immune evasion. May play a role in virus budding. Exerts cytotoxic effects by activating a mitochondrial apoptotic pathway through M ectodomain. May display a viroporin activity. Its function is as follows. Binds to host cell surface receptor and mediates fusion between viral and cellular membranes. Envelope protein is synthesized in the endoplasmic reticulum in the form of heterodimer with protein prM. They play a role in virion budding in the ER, and the newly formed immature particle is covered with 60 spikes composed of heterodimer between precursor prM and envelope protein E. The virion is transported to the Golgi apparatus where the low pH causes dissociation of PrM-E heterodimers and formation of E homodimers. prM-E cleavage is inefficient, and many virions are only partially matured. These uncleaved prM would play a role in immune evasion. In terms of biological role, involved in immune evasion, pathogenesis and viral replication. Once cleaved off the polyprotein, is targeted to three destinations: the viral replication cycle, the plasma membrane and the extracellular compartment. Essential for viral replication. Required for formation of the replication complex and recruitment of other non-structural proteins to the ER-derived membrane structures. Excreted as a hexameric lipoparticle that plays a role against host immune response. Antagonizing the complement function. Binds to the host macrophages and dendritic cells. Inhibits signal transduction originating from Toll-like receptor 3 (TLR3). Functionally, component of the viral RNA replication complex that functions in virion assembly and antagonizes the host alpha/beta interferon antiviral response. Required cofactor for the serine protease function of NS3. May have membrane-destabilizing activity and form viroporins. Its function is as follows. Displays three enzymatic activities: serine protease, NTPase and RNA helicase. NS3 serine protease, in association with NS2B, performs its autocleavage and cleaves the polyprotein at dibasic sites in the cytoplasm: C-prM, NS2A-NS2B, NS2B-NS3, NS3-NS4A, NS4A-2K and NS4B-NS5. NS3 RNA helicase binds RNA and unwinds dsRNA in the 3' to 5' direction. In terms of biological role, regulates the ATPase activity of the NS3 helicase activity. NS4A allows NS3 helicase to conserve energy during unwinding. Functionally, functions as a signal peptide for NS4B and is required for the interferon antagonism activity of the latter. Induces the formation of ER-derived membrane vesicles where the viral replication takes place. Inhibits interferon (IFN)-induced host STAT1 phosphorylation and nuclear translocation, thereby preventing the establishment of cellular antiviral state by blocking the IFN-alpha/beta pathway. Inhibits STAT2 translocation in the nucleus after IFN-alpha treatment. Its function is as follows. Replicates the viral (+) and (-) RNA genome, and performs the capping of genomes in the cytoplasm. NS5 methylates viral RNA cap at guanine N-7 and ribose 2'-O positions. Besides its role in RNA genome replication, also prevents the establishment of cellular antiviral state by blocking the interferon-alpha/beta (IFN-alpha/beta) signaling pathway. Inhibits host TYK2 and STAT2 phosphorylation, thereby preventing activation of JAK-STAT signaling pathway. This Kokobera virus (KOKV) protein is Genome polyprotein.